The chain runs to 1587 residues: NHS-like protein 1 (1587 aa).

Ser24 is subject to Phosphoserine. Disordered regions lie at residues 140–163 (FAAG…KCSL) and 176–202 (RPKT…PLPT). The segment covering 179–196 (TPTSGDFSDLHTQTNWTK) has biased composition (polar residues). Phosphoserine occurs at positions 197 and 328. Polar residues predominate over residues 431–446 (SAGQLDSRTPGSSSYS). Disordered stretches follow at residues 431 to 470 (SAGQ…PRHH) and 549 to 584 (SEPW…VSSC). Positions 449–470 (KPRDRPTPRCSVKDDHQSPRHH) are enriched in basic and acidic residues. Ser563 carries the phosphoserine modification. A compositionally biased stretch (polar residues) spans 573–584 (GCSTPTSNVSSC). A Phosphoserine modification is found at Ser629. Disordered regions lie at residues 661-687 (KAKK…QTNG), 705-767 (SLPG…SSVK), and 789-1059 (NPTG…RPPM). A compositionally biased stretch (low complexity) spans 705-720 (SLPGKGGSSPSQSPCS). Composition is skewed to polar residues over residues 730–750 (SRSQ…TPNV), 757–767 (TPSQSDTSSVK), 792–801 (GGCSANTEAA), and 838–855 (RVTS…TPTA). A compositionally biased stretch (low complexity) spans 885 to 911 (SLISSMSISSSSTSLSSNTSTEGSGTM). Composition is skewed to pro residues over residues 923 to 934 (APPPPPLPPLPS), 958 to 972 (PLPP…PPEA), and 998 to 1021 (SLPP…PPLD). Residues 1040-1055 (SSREALRRPANKEEGC) are compositionally biased toward basic and acidic residues. Ser1079 carries the phosphoserine modification. Disordered stretches follow at residues 1083–1534 (AVLF…ARRA) and 1565–1587 (VDGI…EQKS). Polar residues-rich tracts occupy residues 1089-1099 (PSAQEQRTPTA) and 1112-1141 (SRNS…SQSQ). Ser1157 and Ser1218 each carry phosphoserine. The span at 1222 to 1234 (AEGEAVRSQEEKS) shows a compositional bias: basic and acidic residues. Residues 1275–1285 (QPNTSPGPTQE) are compositionally biased toward polar residues. The span at 1360 to 1370 (GRKDSEDDHTR) shows a compositional bias: basic and acidic residues. Phosphoserine occurs at positions 1373 and 1375. Phosphothreonine is present on Thr1379. A compositionally biased stretch (polar residues) spans 1392 to 1409 (QVGSIQRSIKKSTTSSDN). Residues 1434–1447 (KSTDPRFQRSRSEP) show a composition bias toward basic and acidic residues. 2 stretches are compositionally biased toward low complexity: residues 1448–1460 (SADS…SCSP) and 1484–1503 (SGPR…SRYS). A compositionally biased stretch (polar residues) spans 1576 to 1587 (PSEQCGGTEQKS).

The protein belongs to the NHS family.

This is NHS-like protein 1 (Nhsl1) from Mus musculus (Mouse).